We begin with the raw amino-acid sequence, 396 residues long: MELPRLENVDLSGKRVFLRVDFNVPVENGKVTDKTRIEKTLPTIELLIKKGARIIIASHLGRPKGQVNPEFSLAPVVETFQSLVKSKVYFSKTVIGEDAIKLSKELKNGEILVIENVRFHKEEEENDPGFSKKLAALADIYVNDAFGAAHRAHSSTEGIARLLPAYAGLLMHKEILELSALLHKPARPFVAIIGGSKVSTKIKVLTNLFDKVNHLLIGGGMAYTFLKSRAIPIGNSLVEKEFEVQAFQLIEKAGVAGIDLQLPVDHIIGDQFNEKAKTKSVDKMGILDGWMGMDIGSKTVSNYEKIIKNAGTIFWNGPMGVFEMDKFASGTMAIAKAVAKSKAKTVVGGGDSIAAINKARVADKITHISTGGGASLEFMEGRKLPGVEALKKKTSE.

Residues 21–23 (DFN), R36, 59–62 (HLGR), R118, and R151 each bind substrate. ATP is bound by residues K201, G292, E323, and 349-352 (GGDS).

This sequence belongs to the phosphoglycerate kinase family. In terms of assembly, monomer.

The protein localises to the cytoplasm. It carries out the reaction (2R)-3-phosphoglycerate + ATP = (2R)-3-phospho-glyceroyl phosphate + ADP. The protein operates within carbohydrate degradation; glycolysis; pyruvate from D-glyceraldehyde 3-phosphate: step 2/5. This Leptospira interrogans serogroup Icterohaemorrhagiae serovar copenhageni (strain Fiocruz L1-130) protein is Phosphoglycerate kinase.